A 143-amino-acid polypeptide reads, in one-letter code: Transcriptional regulator MraZ (143 aa).

2 SpoVT-AbrB domains span residues 5–47 (TYTP…PRAE) and 76–119 (TDEQ…DAQA).

It belongs to the MraZ family. As to quaternary structure, forms oligomers.

It is found in the cytoplasm. It localises to the nucleoid. The polypeptide is Transcriptional regulator MraZ (Mycobacterium avium (strain 104)).